Here is a 265-residue protein sequence, read N- to C-terminus: MTGAQLIMACLKAHHVTTLFGYPGGAIMPTYDALYDAGLDHLLCRNEQGTAMAAIGYARSTGKVGVCIATSGPGATNLVIGLGDAMMDSIPVVTITGQVASPLIGTDAFQEADVLGLSLACTKHSFIVQSADVALQGDLIQALNALKQDLDIEPWREQIRNFKAKLDFTYVENQGNRPIDPWALLNSLSNRKPNNAIICTDVGQHQMWLVQHILRVARHCGFTVTTMEMTLIETQVRLKITVKSDRTLDLLVNQLVKLPDVLMVN.

Glu47 serves as a coordination point for thiamine diphosphate. Residues 204–247 form a thiamine pyrophosphate binding region; that stretch reads QHQMWLVQHILRVARHCGFTVTTMEMTLIETQVRLKITVKSDRT.

The protein belongs to the TPP enzyme family. The cofactor is Mg(2+). Thiamine diphosphate is required as a cofactor.

Its function is as follows. Truncated acetolactase synthase; no longer catalytically active. This is an uncharacterized protein from Haemophilus influenzae (strain ATCC 51907 / DSM 11121 / KW20 / Rd).